We begin with the raw amino-acid sequence, 152 residues long: Nucleoside diphosphate kinase (152 aa).

Residues lysine 11, phenylalanine 59, arginine 87, threonine 93, arginine 104, and asparagine 114 each coordinate ATP. The active-site Pros-phosphohistidine intermediate is the histidine 117.

Belongs to the NDK family. As to quaternary structure, homotetramer. Requires Mg(2+) as cofactor.

Its subcellular location is the cytoplasm. It carries out the reaction a 2'-deoxyribonucleoside 5'-diphosphate + ATP = a 2'-deoxyribonucleoside 5'-triphosphate + ADP. It catalyses the reaction a ribonucleoside 5'-diphosphate + ATP = a ribonucleoside 5'-triphosphate + ADP. Its function is as follows. Major role in the synthesis of nucleoside triphosphates other than ATP. The ATP gamma phosphate is transferred to the NDP beta phosphate via a ping-pong mechanism, using a phosphorylated active-site intermediate. The chain is Nucleoside diphosphate kinase from Prochlorococcus marinus (strain MIT 9312).